A 477-amino-acid polypeptide reads, in one-letter code: Calcium uptake protein 1, mitochondrial (477 aa).

A mitochondrion-targeting transit peptide spans 1 to 33; it reads MFRLNALSALAELAVGSRWYHGTSQPTQTKRRL. The tract at residues 55-108 is disordered; it reads AHAESPPSVNSKKTDAGDKGKSKDTREVSSHEGSAADTAAEPYPEEKKKKRSGF. Residues 66 to 84 show a composition bias toward basic and acidic residues; the sequence is KKTDAGDKGKSKDTREVSS. The polybasic region stretch occupies residues 101 to 112; it reads KKKKRSGFRDRK. Position 124 is a phosphoserine (Ser124). A k/R-ring region spans residues 128-131; sequence KIFR. An EF-hand 1 domain is found at 220–255; the sequence is TPQRNFEIAFKMFDLNGDGEVDMEEFEQVQSIIRSQ. Ca(2+) contacts are provided by Asp233, Asn235, Asp237, Glu239, and Glu244. The interval 261–265 is k/R-ring; sequence RHRDR. In terms of domain architecture, EF-hand 2; degenerate spans 356 to 376; the sequence is KDGKGLTFQEVENFFTFLKNI. One can recognise an EF-hand 3 domain in the interval 410–445; that stretch reads LSDHVCDVVFALFDCDGNGELSNKEFVSIMKQRLMR. Residues Asp423, Asp425, Asn427, Glu429, and Glu434 each coordinate Ca(2+). Arg457 bears the Asymmetric dimethylarginine mark. The interval 457 to 467 is C-helix region; sequence RLMQAMWKCAQ.

Belongs to the MICU1 family. MICU1 subfamily. In terms of assembly, heterodimer; disulfide-linked; heterodimerizes with MICU2 or MICU3. Homodimer; disulfide-linked. Component of the uniplex complex, composed of MCU, EMRE/SMDT1, MICU1 and MICU2 (or MICU3) in a 4:4:1:1 stoichiometry. The composition of calcium sensors within the uniplex complex can differ depending on tissues: a MICU1 homodimer can be present instead of the MICU1-MICU2 heterodimer in skeletal-muscle and kidney. MICU1 is recruited to the uniplex complex by EMRE/SMDT1, and it associates with MCU at low calcium levels, occluding the pore of the MCU channel. Associates with the MICOS complex. Interacts with SLC25A23. Interacts with CHCHD4/MIA40; which introduces the interchain disulfide bond with MICU2. Interacts (when methylated) with UCP2; leading to decrease the calcium sensitivity of MICU1. In terms of processing, phosphorylation at Ser-124 by AKT1 impairs its maturation and stability. Post-translationally, asymmetric dimethylation at Arg-457 by PRMT1 decreases the calcium sensitivity of MICU1 by promoting interaction with UCP2. Degraded by YME1L1 when not complexed as homodimer or heterodimer. Not degraded when complexed as homodimer or heterodimer; the presence of the interchain disulfide bond protecting MICU1 from degradation by YME1L1.

Its subcellular location is the mitochondrion intermembrane space. The protein resides in the mitochondrion inner membrane. Functionally, calcium sensor of the mitochondrial calcium uniporter (MCU) channel, which senses calcium level via its EF-hand domains. MICU1 and MICU2 (or MICU3) form a disulfide-linked heterodimer that stimulates and inhibits MCU activity, depending on the concentration of calcium. At low calcium levels, MICU1 occludes the pore of the MCU channel, preventing mitochondrial calcium uptake. At higher calcium levels, calcium-binding to MICU1 and MICU2 (or MICU3) induces a conformational change that weakens MCU-MICU1 interactions and moves the MICU1-MICU2 heterodimer away from the pore, allowing calcium permeation through the MCU channel. Also required to protect against manganese toxicity by preventing manganese uptake by MCU: mechanistically, manganese-binding to its EF-hand domains does not induce any conformational change, maintaining MCU pore occlusion. Acts as a regulator of mitochondrial cristae structure independently of its ability to regulate the mitochondrial calcium uniporter channel. Regulates glucose-dependent insulin secretion in pancreatic beta-cells by regulating mitochondrial calcium uptake. Induces T-helper 1-mediated autoreactivity, which is accompanied by the release of IFNG. This is Calcium uptake protein 1, mitochondrial (Micu1) from Rattus norvegicus (Rat).